The primary structure comprises 1178 residues: Pyruvate carboxylase, mitochondrial (1178 aa).

The N-terminal 20 residues, 1–20 (MLKFRTVHGGLRLLGIRRTS), are a transit peptide targeting the mitochondrion. Residues Lys35 and Lys39 each carry the N6-acetyllysine modification. Positions 36 to 486 (PIKKVMVANR…DTQFIDENPE (451 aa)) constitute a Biotin carboxylation domain. Lys79 bears the N6-acetyllysine; alternate mark. The residue at position 79 (Lys79) is an N6-succinyllysine; alternate. Residues Lys148 and Lys152 each carry the N6-acetyllysine modification. Residues Lys152 and Glu236 each coordinate ATP. Residues 156 to 353 (RAIAIAAGVP…LVHAQIHVAE (198 aa)) enclose the ATP-grasp domain. Lys241 carries the post-translational modification N6-acetyllysine. Position 271 (His271) interacts with ATP. An N6-acetyllysine mark is found at Lys297 and Lys319. The active site involves Arg328. The residue at position 434 (Lys434) is an N6-acetyllysine. Lys442 is modified (N6-succinyllysine). The Pyruvate carboxyltransferase domain maps to 563 to 832 (LLLMDTTFRD…DTEVPMERVF (270 aa)). 571 to 575 (RDAHQ) contacts substrate. Asp572 is a binding site for Mn(2+). Lys589 is modified (N6-acetyllysine). Substrate is bound at residue Arg644. An N6-acetyllysine mark is found at Lys661 and Lys717. Lys741 is a binding site for Mn(2+). Position 741 is an N6-carboxylysine (Lys741). Lys748 carries the N6-acetyllysine modification. His771 and His773 together coordinate Mn(2+). An N6-acetyllysine modification is found at Lys892. A substrate-binding site is contributed by Thr908. Residues Lys969 and Lys992 each carry the N6-acetyllysine modification. Residue Thr1003 is modified to Phosphothreonine. N6-acetyllysine is present on residues Lys1061, Lys1090, and Lys1124. The Biotinyl-binding domain occupies 1109–1178 (KGQIGAPMPG…EGDDLILEIE (70 aa)). Lys1144 carries the N6-biotinyllysine modification.

In terms of assembly, homotetramer. Interacts (via the biotin carboxylation domain) with SIRT4. The cofactor is biotin. Mn(2+) serves as cofactor. In terms of processing, acetylation of Lys-748 might play a role in catalytic activity regulation.

Its subcellular location is the mitochondrion matrix. The enzyme catalyses hydrogencarbonate + pyruvate + ATP = oxaloacetate + ADP + phosphate + H(+). It functions in the pathway carbohydrate biosynthesis; gluconeogenesis. Functionally, pyruvate carboxylase catalyzes a 2-step reaction, involving the ATP-dependent carboxylation of the covalently attached biotin in the first step and the transfer of the carboxyl group to pyruvate in the second. Catalyzes in a tissue specific manner, the initial reactions of glucose (liver, kidney) and lipid (adipose tissue, liver, brain) synthesis from pyruvate. The polypeptide is Pyruvate carboxylase, mitochondrial (Homo sapiens (Human)).